Consider the following 259-residue polypeptide: Protoheme IX farnesyltransferase (259 aa).

8 helical membrane-spanning segments follow: residues 15–35 (LICL…NGVL), 61–81 (ATVA…TFLP), 83–103 (LTTA…TLWF), 109–129 (WGVV…ASAV), 137–157 (PLIL…ALAL), 182–202 (VCIF…WFTG), 208–228 (FAIE…LYLV), and 236–256 (AFQA…IDIC).

It belongs to the UbiA prenyltransferase family. Protoheme IX farnesyltransferase subfamily.

It localises to the cell inner membrane. It carries out the reaction heme b + (2E,6E)-farnesyl diphosphate + H2O = Fe(II)-heme o + diphosphate. Its pathway is porphyrin-containing compound metabolism; heme O biosynthesis; heme O from protoheme: step 1/1. Its function is as follows. Converts heme B (protoheme IX) to heme O by substitution of the vinyl group on carbon 2 of heme B porphyrin ring with a hydroxyethyl farnesyl side group. This is Protoheme IX farnesyltransferase from Geotalea uraniireducens (strain Rf4) (Geobacter uraniireducens).